We begin with the raw amino-acid sequence, 236 residues long: Sperm flagellar protein 1 (236 aa).

Residues 7–112 (EEALHQLYLW…VLIPLRQRLE (106 aa)) enclose the Calponin-homology (CH) domain. Residues 118-177 (RKQGIGSLQELAPQDGTDYMDVGLSQKARGEGVPDPQGRGQLREGRLPVPRPPGDSQALQ) form a disordered region. The tract at residues 183-236 (ILQIAEKEQELLASQETVQVLQMKVRRLEHLLQLKNVRIEDLSRRLQQAERKQR) is essential for homodimerization and microtubule bundling activity.

In terms of assembly, homodimer. Interacts with actin, TJP1, CGN and CDH1.

It is found in the cytoplasm. It localises to the cell projection. Its subcellular location is the cilium. The protein localises to the flagellum. The protein resides in the cytoskeleton. It is found in the cilium axoneme. It localises to the apical cell membrane. Its subcellular location is the basolateral cell membrane. The protein localises to the stress fiber. The protein resides in the microvillus. It is found in the lamellipodium. It localises to the filopodium. Microtubule-associated protein involved in the stabilization of microtubules along the axis of migration during radial intercalation. Promotes the establishment and stabilization of an axis of microtubules required for the active migration of cells into the outer epithelium. Microtubule-associated protein that promotes microtubule bundling and stabilizes microtubules against depolymerization in response to cold shock. Essential for ciliary central apparatus formation which requires both its microtubule-binding and bundling activities and for ciliary localization of HYDIN and SPAG6 in ependymal cilia. Binds actin in intestinal epithelial cells (IECs), essential for IECs survival and contributes to formation of filopodia and lamellipodia in migrating IECs. Regulates planar cell polarity signaling pathway and asymmetric microtubule accumulation in ciliated epithelia. This Bos taurus (Bovine) protein is Sperm flagellar protein 1 (SPEF1).